The primary structure comprises 363 residues: Phosphoserine aminotransferase (363 aa).

Arg-42 contributes to the L-glutamate binding site. Residues 76–77 (GR), Trp-102, Thr-156, Asp-175, and Gln-198 contribute to the pyridoxal 5'-phosphate site. Lys-199 carries the N6-(pyridoxal phosphate)lysine modification. 240 to 241 (NT) lines the pyridoxal 5'-phosphate pocket.

The protein belongs to the class-V pyridoxal-phosphate-dependent aminotransferase family. SerC subfamily. Homodimer. Requires pyridoxal 5'-phosphate as cofactor.

It is found in the cytoplasm. It catalyses the reaction O-phospho-L-serine + 2-oxoglutarate = 3-phosphooxypyruvate + L-glutamate. It carries out the reaction 4-(phosphooxy)-L-threonine + 2-oxoglutarate = (R)-3-hydroxy-2-oxo-4-phosphooxybutanoate + L-glutamate. It functions in the pathway amino-acid biosynthesis; L-serine biosynthesis; L-serine from 3-phospho-D-glycerate: step 2/3. The protein operates within cofactor biosynthesis; pyridoxine 5'-phosphate biosynthesis; pyridoxine 5'-phosphate from D-erythrose 4-phosphate: step 3/5. Its function is as follows. Catalyzes the reversible conversion of 3-phosphohydroxypyruvate to phosphoserine and of 3-hydroxy-2-oxo-4-phosphonooxybutanoate to phosphohydroxythreonine. This Shewanella sp. (strain MR-7) protein is Phosphoserine aminotransferase.